A 190-amino-acid polypeptide reads, in one-letter code: Adenine phosphoribosyltransferase (190 aa).

It belongs to the purine/pyrimidine phosphoribosyltransferase family. Homodimer.

The protein localises to the cytoplasm. The catalysed reaction is AMP + diphosphate = 5-phospho-alpha-D-ribose 1-diphosphate + adenine. It participates in purine metabolism; AMP biosynthesis via salvage pathway; AMP from adenine: step 1/1. Its function is as follows. Catalyzes a salvage reaction resulting in the formation of AMP, that is energically less costly than de novo synthesis. This chain is Adenine phosphoribosyltransferase, found in Treponema denticola (strain ATCC 35405 / DSM 14222 / CIP 103919 / JCM 8153 / KCTC 15104).